Consider the following 1400-residue polypeptide: DNA-directed RNA polymerase subunit beta' (1400 aa).

Residues Cys70, Cys72, Cys85, and Cys88 each contribute to the Zn(2+) site. Residues Asp460, Asp462, and Asp464 each contribute to the Mg(2+) site. Zn(2+)-binding residues include Cys814, Cys887, Cys894, and Cys897.

The protein belongs to the RNA polymerase beta' chain family. As to quaternary structure, the RNAP catalytic core consists of 2 alpha, 1 beta, 1 beta' and 1 omega subunit. When a sigma factor is associated with the core the holoenzyme is formed, which can initiate transcription. Mg(2+) serves as cofactor. Zn(2+) is required as a cofactor.

It carries out the reaction RNA(n) + a ribonucleoside 5'-triphosphate = RNA(n+1) + diphosphate. DNA-dependent RNA polymerase catalyzes the transcription of DNA into RNA using the four ribonucleoside triphosphates as substrates. This Marinomonas sp. (strain MWYL1) protein is DNA-directed RNA polymerase subunit beta'.